Reading from the N-terminus, the 92-residue chain is Small ribosomal subunit protein uS19c (92 aa).

It belongs to the universal ribosomal protein uS19 family.

Its subcellular location is the plastid. It localises to the chloroplast. Functionally, protein S19 forms a complex with S13 that binds strongly to the 16S ribosomal RNA. This Phaeodactylum tricornutum (strain CCAP 1055/1) protein is Small ribosomal subunit protein uS19c.